The chain runs to 434 residues: CinA-like protein (434 aa).

Belongs to the CinA family.

This chain is CinA-like protein, found in Mycobacterium avium (strain 104).